Consider the following 834-residue polypeptide: ATP-dependent RNA helicase ddx23 (834 aa).

Disordered stretches follow at residues 1-245 (MDPP…TQFS) and 322-371 (FGGY…GKQI). Basic and acidic residues predominate over residues 10–25 (SKRDTKKKDEVNKEQP). Residues 42–54 (SNPTQEEPTNTLQ) show a composition bias toward polar residues. Composition is skewed to basic and acidic residues over residues 70–110 (GLKE…DYRD), 117–164 (GRDR…RRDG), 171–205 (RRRD…RDND), and 231–245 (DIHK…TQFS). A compositionally biased stretch (low complexity) spans 328–362 (NNNNNGNHYNGNIYNNNNNNNNNNNNNNNINNNNN). The short motif at 413 to 441 (RTWQESNLPREILEAIRQLGYEKPSPIQM) is the Q motif element. The region spanning 444–643 (IPISLTGRDI…KKYLRRPCTI (200 aa)) is the Helicase ATP-binding domain. ATP is bound at residue 457–464 (AETGSGKT). The DEAD box signature appears at 570-573 (DEAD). Residues 654–815 (RIRQTVIFVK…IVPIELLKHP (162 aa)) enclose the Helicase C-terminal domain. Residues 813 to 834 (KHPSSQQKHGSSKDHNKSVIFK) are disordered. A compositionally biased stretch (basic and acidic residues) spans 823-834 (SSKDHNKSVIFK).

This sequence belongs to the DEAD box helicase family. DDX23/PRP28 subfamily.

Its subcellular location is the cytoplasm. It is found in the nucleus. It carries out the reaction ATP + H2O = ADP + phosphate + H(+). In terms of biological role, probable ATP-dependent RNA helicase which may be involved in mRNA splicing. This Dictyostelium discoideum (Social amoeba) protein is ATP-dependent RNA helicase ddx23 (helB2).